The sequence spans 724 residues: uncharacterized protein (724 aa).

Disordered stretches follow at residues 1-23, 166-477, 496-517, and 532-691; these read MEDR…IPDN, PDGY…PPRD, EAHD…AHGP, and DHPI…PALS. Polar residues-rich tracts occupy residues 227 to 245 and 270 to 296; these read VSQS…TVNQ and STTL…TSDA. Positions 304-322 are enriched in basic and acidic residues; sequence TRDHDRYGNGRGPDTDRLE. Positions 403–413 are enriched in polar residues; the sequence is PSSSHSETPNM. Composition is skewed to basic and acidic residues over residues 550-560 and 637-657; these read RNHEFTEDKRL and LRHD…DLAA. Low complexity predominate over residues 682–691; sequence RLAAASPALS.

This is an uncharacterized protein from Neurospora crassa (strain ATCC 24698 / 74-OR23-1A / CBS 708.71 / DSM 1257 / FGSC 987).